The following is a 173-amino-acid chain: Insertion element IS150 protein InsJ (173 aa).

This sequence belongs to the IS150/IS1296 orfA family.

This is Insertion element IS150 protein InsJ (insJ) from Escherichia coli (strain K12).